The chain runs to 1023 residues: Vacuolar membrane protease (1023 aa).

The Cytoplasmic portion of the chain corresponds to 1–80 (MRAAGCGGTG…FFRSVFGYRK (80 aa)). Positions 17 to 48 (KLSRSISQHQPKSMPQASVNSEQNPSVPNSPS) are enriched in polar residues. The tract at residues 17-59 (KLSRSISQHQPKSMPQASVNSEQNPSVPNSPSAHKPARSQSAQ) is disordered. Residues 81-101 (TSLTFLVALVFAATLLLSWAD) form a helical membrane-spanning segment. Residues 102–425 (SSLDFSVDMP…VVFSVSQVVS (324 aa)) lie on the Vacuolar side of the membrane. 2 N-linked (GlcNAc...) asparagine glycosylation sites follow: asparagine 170 and asparagine 200. Histidine 214 and aspartate 226 together coordinate Zn(2+). The Proton acceptor role is filled by glutamate 259. Zn(2+) contacts are provided by glutamate 260, glutamate 285, and histidine 357. A helical membrane pass occupies residues 426–446 (ANIALLVVVPVASLLLLFIIF). Over 447 to 461 (RCNKGWGFNFVNAIK) the chain is Cytoplasmic. Residues 462 to 482 (YPLSLVASVLVLTFVSQVIIV) form a helical membrane-spanning segment. At 483-491 (PSNPFLVNS) the chain is on the vacuolar side. N-linked (GlcNAc...) asparagine glycosylation is present at asparagine 490. A helical membrane pass occupies residues 492 to 512 (SIGLLVATLFSLFLLLNYIVL). Over 513-529 (NGLNLVFKSFKGHQHDE) the chain is Cytoplasmic. The helical transmembrane segment at 530–550 (KLIVMCESSFLTWILLLWSTV) threads the bilayer. Residues 551–564 (KLSHNKFGDDHTGE) lie on the Vacuolar side of the membrane. The chain crosses the membrane as a helical span at residues 565-585 (LFIPILFSLQAVACFLGFLGW). At 586–643 (CFKPSKKVKVSREEHQPLLSSNGSNYGTQDDDDSLAPSSSLSLQSGFSENCEVHETKS) the chain is on the cytoplasmic side. Positions 604–613 (LSSNGSNYGT) are enriched in polar residues. Positions 604–626 (LSSNGSNYGTQDDDDSLAPSSSL) are disordered. Residues 644–664 (FSYDWLVQFLVIVPISSLIIF) form a helical membrane-spanning segment. Over 665–687 (NSGSLILNGLNKSIQESLSAQNL) the chain is Vacuolar. Asparagine 675 carries N-linked (GlcNAc...) asparagine glycosylation. A helical membrane pass occupies residues 688–708 (IYKFIQIFVIVWSIPFLPFIF). Topologically, residues 709-712 (KLNR) are cytoplasmic. The chain crosses the membrane as a helical span at residues 713–733 (IIVLALSLVLLYGFFAVNITD). The Vacuolar portion of the chain corresponds to 734-1023 (AFNDANPLKL…MVSVTKYIEV (290 aa)). N-linked (GlcNAc...) asparagine glycans are attached at residues asparagine 815, asparagine 858, and asparagine 892.

Belongs to the peptidase M28 family. Zn(2+) is required as a cofactor.

The protein localises to the vacuole membrane. Its function is as follows. May be involved in vacuolar sorting and osmoregulation. This Clavispora lusitaniae (strain ATCC 42720) (Yeast) protein is Vacuolar membrane protease.